The following is a 286-amino-acid chain: Polyamine aminopropyltransferase (286 aa).

Residues 5–238 (TMWHETLHDQ…GIMTFAWATD (234 aa)) form the PABS domain. Position 33 (Gln33) interacts with S-methyl-5'-thioadenosine. Positions 64 and 88 each coordinate spermidine. Residues Glu108 and 140–141 (DG) each bind S-methyl-5'-thioadenosine. Asp158 serves as the catalytic Proton acceptor. 158–161 (DCTD) serves as a coordination point for spermidine. Pro165 contacts S-methyl-5'-thioadenosine.

This sequence belongs to the spermidine/spermine synthase family. Homodimer or homotetramer.

Its subcellular location is the cytoplasm. It carries out the reaction S-adenosyl 3-(methylsulfanyl)propylamine + putrescine = S-methyl-5'-thioadenosine + spermidine + H(+). The protein operates within amine and polyamine biosynthesis; spermidine biosynthesis; spermidine from putrescine: step 1/1. Functionally, catalyzes the irreversible transfer of a propylamine group from the amino donor S-adenosylmethioninamine (decarboxy-AdoMet) to putrescine (1,4-diaminobutane) to yield spermidine. In Salmonella paratyphi A (strain ATCC 9150 / SARB42), this protein is Polyamine aminopropyltransferase.